The chain runs to 346 residues: Phosphoribosylformylglycinamidine cyclo-ligase (346 aa).

Belongs to the AIR synthase family.

The protein resides in the cytoplasm. It catalyses the reaction 2-formamido-N(1)-(5-O-phospho-beta-D-ribosyl)acetamidine + ATP = 5-amino-1-(5-phospho-beta-D-ribosyl)imidazole + ADP + phosphate + H(+). Its pathway is purine metabolism; IMP biosynthesis via de novo pathway; 5-amino-1-(5-phospho-D-ribosyl)imidazole from N(2)-formyl-N(1)-(5-phospho-D-ribosyl)glycinamide: step 2/2. The sequence is that of Phosphoribosylformylglycinamidine cyclo-ligase from Bacillus cereus (strain ATCC 10987 / NRS 248).